Here is a 144-residue protein sequence, read N- to C-terminus: Small ribosomal subunit protein eS12 (144 aa).

It belongs to the eukaryotic ribosomal protein eS12 family.

The chain is Small ribosomal subunit protein eS12 (RPS12) from Trypanosoma brucei brucei.